The sequence spans 83 residues: Small ribosomal subunit protein bS16 (83 aa).

It belongs to the bacterial ribosomal protein bS16 family.

The protein is Small ribosomal subunit protein bS16 of Aromatoleum aromaticum (strain DSM 19018 / LMG 30748 / EbN1) (Azoarcus sp. (strain EbN1)).